A 648-amino-acid chain; its full sequence is MIKITFPNTSARNYAIGTTPMQIAESISCRLAEEILSANVNGEMWDLSRPINENASVKLYKWEDFEGKRTFWHSSAHLLAESLQELYPNIHFGMGPAIENGFYYDVDLGDGVVIKDVDLVTIEKKMQELASKKLSISRQNVTKQNALELFGKKGETYKIELISKLEDGKITVYTQGNFTDLCRGPHLPNTSYIKAIKLTSVARAYWKGDESRKQLTRIYGISFPKKEELSEYLALMEKAKKRDHRRIGKEMELFTFSHKVGRGLPLWLPKGTQLRLRLEDFLKRIQKKYGYQQVITPHIGNKTLYIASGHYAKYGKDSFQPIHTPELGEEFLLKPMNCPHHCEIYKAFLRSYKELPLRLAEFGTVYRYERSGELQGLTRVRGFTQDDAHIFCSPEQVKEELIKVIDIVRVIFCALNFNDYEVQISLRDLNNRIKYIGSEENWKNSEGAIIEVCQEKKIKAKIKLGEAAFYGPKLDFMVKDALGRNWQLGTIQVDYNLPERFELEYVGADNQKHRPVMIHRAPFGSMERFVAVMIEHTGGKFPLWLVSDQVVILPVSENYNQYAEEIAKEFHKRDIRVTIDKRNEKVGRKIRDNELKKIPYLLIIGEKERRNSEISVRKHGKENIGIMKVTEFAEFLKKEVERQMSQWQ.

In terms of domain architecture, TGS spans 1 to 61; the sequence is MIKITFPNTS…NENASVKLYK (61 aa). The segment at 243-542 is catalytic; sequence DHRRIGKEME…MIEHTGGKFP (300 aa). Zn(2+) contacts are provided by Cys338, His389, and His519.

This sequence belongs to the class-II aminoacyl-tRNA synthetase family. Homodimer. Zn(2+) is required as a cofactor.

It localises to the cytoplasm. It catalyses the reaction tRNA(Thr) + L-threonine + ATP = L-threonyl-tRNA(Thr) + AMP + diphosphate + H(+). In terms of biological role, catalyzes the attachment of threonine to tRNA(Thr) in a two-step reaction: L-threonine is first activated by ATP to form Thr-AMP and then transferred to the acceptor end of tRNA(Thr). Also edits incorrectly charged L-seryl-tRNA(Thr). The chain is Threonine--tRNA ligase from Azobacteroides pseudotrichonymphae genomovar. CFP2.